An 842-amino-acid polypeptide reads, in one-letter code: Probable vinculin (842 aa).

Residues 585–679 (KEARKRLDDV…AAEEEERKRA (95 aa)) are a coiled coil.

This sequence belongs to the vinculin/alpha-catenin family. In terms of assembly, monomer. Associates with F-actin. Interacts with aarA, ctxA, ctxB and rgaA. Epithelium.

It localises to the cytoplasm. The protein localises to the cell cortex. The protein resides in the cell junction. Its function is as follows. Involved in cell adhesion. Thought to play an important role in cytokinesis B, probably by providing substrate adhesion and traction forces. Required to organize and polarize the tip epithelium during cytokinesis. Required for the normal distribution of myosin in the tip epithelium. Involved in the localization of ctxA, ctxB, dcsA, exoc6 and rgaA. Thought to form a complex with ctxA, ctxB, and rgaA which regulates myosin accumulation to the apical plasma membrane. The chain is Probable vinculin (ctnnA) from Dictyostelium discoideum (Social amoeba).